The following is an 805-amino-acid chain: Probable exo-1,4-beta-xylosidase xlnD (805 aa).

An N-terminal signal peptide occupies residues 1–17 (MAVAALALLALLPQALG). 5 N-linked (GlcNAc...) asparagine glycosylation sites follow: asparagine 20, asparagine 115, asparagine 140, asparagine 235, and asparagine 244. The active site involves aspartate 308. N-linked (GlcNAc...) asparagine glycans are attached at residues asparagine 350, asparagine 383, asparagine 405, asparagine 434, asparagine 445, asparagine 486, asparagine 490, asparagine 622, asparagine 653, asparagine 667, asparagine 689, and asparagine 711.

It belongs to the glycosyl hydrolase 3 family.

The protein localises to the secreted. It carries out the reaction Hydrolysis of (1-&gt;4)-beta-D-xylans, to remove successive D-xylose residues from the non-reducing termini.. It functions in the pathway glycan degradation; xylan degradation. Its function is as follows. Xylan 1,4-beta-xylosidase involved in the hydrolysis of xylan, a major structural heterogeneous polysaccharide found in plant biomass representing the second most abundant polysaccharide in the biosphere, after cellulose. This chain is Probable exo-1,4-beta-xylosidase xlnD (xlnD), found in Aspergillus aculeatus.